A 577-amino-acid polypeptide reads, in one-letter code: Insulin-like growth factor 2 mRNA-binding protein 1 (577 aa).

2 RRM domains span residues 2-75 and 81-156; these read NKLY…HSVP and RKIQ…YIPD. A phosphoserine mark is found at S12 and S73. The tract at residues 160–190 is disordered; the sequence is AQGPENGRRGGFGSRGQPRQGSPVAAGAPAK. S181 is subject to Phosphoserine. KH domains lie at 195–260, 276–343, 405–470, and 487–553; these read DIPL…CKMI, EVPL…EQEI, QEMV…QGRI, and KLET…QRKI. Positions 310–324 are sufficient for nuclear export; the sequence is ITISSLQDLTLYNPE. The interval 485-495 is sufficient for nuclear export; the sequence is EVKLETHIRVP. T528 is modified (phosphothreonine).

The protein belongs to the RRM IMP/VICKZ family. In terms of assembly, can form homodimers and heterodimers with IGF2BP1 and IGF2BP3. Component of the coding region determinant (CRD)-mediated complex, composed of DHX9, HNRNPU, IGF2BP1, SYNCRIP and YBX1. During HCV infection, identified in a HCV IRES-mediated translation complex, at least composed of EIF3C, IGF2BP1, RPS3 and HCV RNA-replicon. Interacts (via the KH domains) with HIV-1 GAG (via the second zinc finger motif of NC). Associates (via the RRM domains and KH domains) with HIV-1 particles. Identified in a mRNP complex, composed of at least DHX9, DDX3X, ELAVL1, HNRNPU, IGF2BP1, ILF3, PABPC1, PCBP2, PTBP2, STAU1, STAU2, SYNCRIP and YBX1. Identified in a IGF2BP1-dependent mRNP granule complex containing untranslated mRNAs. Interacts with DHX9, ELAVL2, HNRNPA2B1, HNRNPC, HNRNPH1, HNRNPU, IGF2BP2, ILF2, and YBX1. Interacts with FMR1. Component of a multisubunit autoregulatory RNP complex (ARC), at least composed of IGF2BP1, PABPC1 and CSDE1/UNR. Directly interacts with PABPC1. Component of a TAU mRNP complex, at least composed of IGF2BP1, ELAVL4 and G3BP. Interacts with ELAVL4 in an RNA-dependent manner. Associates with microtubules and polysomes. Interacts with AGO1 and AGO2. Interacts with ELAVL1 and MATR3. Interacts (via KH3 and KH4 domains) with SEPIN14P20 peptide RBRP; the interaction results in increased binding of IGF2BP1 to N6-methyladenosine (m6A)-containing mRNAs. Phosphorylated at Ser-181 by mTORC2 cotranslationally, promoting binding to the 3'-UTR of IGF2 mRNA. In terms of tissue distribution, mainly expressed in the embryo, including in fetal liver, fetal lung, fetal kidney, fetal thymus (at protein level). Also expressed follicles of ovary, as well as in gonocytes of testis, spermatogonia, semen, oocytes and placenta (at protein level). Expressed in various cancers, including testis and lung cancers (at protein level), as well as kidney, prostate and trachea cancers.

It localises to the nucleus. It is found in the cytoplasm. The protein localises to the perinuclear region. The protein resides in the P-body. Its subcellular location is the stress granule. It localises to the cell projection. It is found in the lamellipodium. The protein localises to the dendrite. The protein resides in the dendritic spine. Its subcellular location is the growth cone. It localises to the filopodium. It is found in the axon. Functionally, RNA-binding factor that recruits target transcripts to cytoplasmic protein-RNA complexes (mRNPs). This transcript 'caging' into mRNPs allows mRNA transport and transient storage. It also modulates the rate and location at which target transcripts encounter the translational apparatus and shields them from endonuclease attacks or microRNA-mediated degradation. Preferentially binds to N6-methyladenosine (m6A)-containing mRNAs and increases their stability. Plays a direct role in the transport and translation of transcripts required for axonal regeneration in adult sensory neurons. Regulates localized beta-actin/ACTB mRNA translation, a crucial process for cell polarity, cell migration and neurite outgrowth. Co-transcriptionally associates with the ACTB mRNA in the nucleus. This binding involves a conserved 54-nucleotide element in the ACTB mRNA 3'-UTR, known as the 'zipcode'. The RNP thus formed is exported to the cytoplasm, binds to a motor protein and is transported along the cytoskeleton to the cell periphery. During transport, prevents ACTB mRNA from being translated into protein. When the RNP complex reaches its destination near the plasma membrane, IGF2BP1 is phosphorylated. This releases the mRNA, allowing ribosomal 40S and 60S subunits to assemble and initiate ACTB protein synthesis. Monomeric ACTB then assembles into the subcortical actin cytoskeleton. During neuronal development, key regulator of neurite outgrowth, growth cone guidance and neuronal cell migration, presumably through the spatiotemporal fine tuning of protein synthesis, such as that of ACTB. May regulate mRNA transport to activated synapses. Binds to and stabilizes ABCB1/MDR-1 mRNA. During interstinal wound repair, interacts with and stabilizes PTGS2 transcript. PTGS2 mRNA stabilization may be crucial for colonic mucosal wound healing. Binds to the 3'-UTR of IGF2 mRNA by a mechanism of cooperative and sequential dimerization and regulates IGF2 mRNA subcellular localization and translation. Binds to MYC mRNA, in the coding region instability determinant (CRD) of the open reading frame (ORF), hence preventing MYC cleavage by endonucleases and possibly microRNA targeting to MYC-CRD. Binding to MYC mRNA is enhanced by m6A-modification of the CRD. Binds to the 3'-UTR of CD44 mRNA and stabilizes it, hence promotes cell adhesion and invadopodia formation in cancer cells. Binds to the oncofetal H19 transcript and to the neuron-specific TAU mRNA and regulates their localizations. Binds to and stabilizes BTRC/FBW1A mRNA. Binds to the adenine-rich autoregulatory sequence (ARS) located in PABPC1 mRNA and represses its translation. PABPC1 mRNA-binding is stimulated by PABPC1 protein. Prevents BTRC/FBW1A mRNA degradation by disrupting microRNA-dependent interaction with AGO2. Promotes the directed movement of tumor-derived cells by fine-tuning intracellular signaling networks. Binds to MAPK4 3'-UTR and inhibits its translation. Interacts with PTEN transcript open reading frame (ORF) and prevents mRNA decay. This combined action on MAPK4 (down-regulation) and PTEN (up-regulation) antagonizes HSPB1 phosphorylation, consequently it prevents G-actin sequestration by phosphorylated HSPB1, allowing F-actin polymerization. Hence enhances the velocity of cell migration and stimulates directed cell migration by PTEN-modulated polarization. Interacts with Hepatitis C virus (HCV) 5'-UTR and 3'-UTR and specifically enhances translation at the HCV IRES, but not 5'-cap-dependent translation, possibly by recruiting eIF3. Interacts with HIV-1 GAG protein and blocks the formation of infectious HIV-1 particles. Reduces HIV-1 assembly by inhibiting viral RNA packaging, as well as assembly and processing of GAG protein on cellular membranes. During cellular stress, such as oxidative stress or heat shock, stabilizes target mRNAs that are recruited to stress granules, including CD44, IGF2, MAPK4, MYC, PTEN, RAPGEF2 and RPS6KA5 transcripts. This Homo sapiens (Human) protein is Insulin-like growth factor 2 mRNA-binding protein 1 (IGF2BP1).